The primary structure comprises 419 residues: MLKRSMNIADYDPVLWQAIQDENLRQEEHIELIASENYASPRVMEAQGCQFTNKYAEGYPGKRYYGGCEYADIVEQLAIDRAKALFGADYANVQPHSGSQANAAVYMALLNPGDTILGMSLAHGGHLTHGASVSFSGKIYKAEQYGITSEGLIDYDALRKQAHEVKPKMIVGGFSAYSQIVDWAKMREIADEVGAYLFVDMAHVAGLIAAGVYPSPMPHAHVVTTTTHKTLAGPRGGLILANGNEELYKKLNSAVFPAGQGGPLVHVIAAKAVCFKEALEPEFKTYQAQVVKNAKAMVKVFKQRGYNVVSNGTENHLFLVDLVNHGLTGKAADAALSRANITVNKNAVPNDPQKPFVTSGIRVGTPAVTRRGFNEEDVAELAGWMCDILDSMNKDNHEQVIADTKEKVLAICKRLPVYP.

Residues Leu-121 and 125-127 (GHL) each bind (6S)-5,6,7,8-tetrahydrofolate. Lys-229 is subject to N6-(pyridoxal phosphate)lysine.

The protein belongs to the SHMT family. In terms of assembly, homodimer. The cofactor is pyridoxal 5'-phosphate.

Its subcellular location is the cytoplasm. The enzyme catalyses (6R)-5,10-methylene-5,6,7,8-tetrahydrofolate + glycine + H2O = (6S)-5,6,7,8-tetrahydrofolate + L-serine. Its pathway is one-carbon metabolism; tetrahydrofolate interconversion. It functions in the pathway amino-acid biosynthesis; glycine biosynthesis; glycine from L-serine: step 1/1. In terms of biological role, catalyzes the reversible interconversion of serine and glycine with tetrahydrofolate (THF) serving as the one-carbon carrier. This reaction serves as the major source of one-carbon groups required for the biosynthesis of purines, thymidylate, methionine, and other important biomolecules. Also exhibits THF-independent aldolase activity toward beta-hydroxyamino acids, producing glycine and aldehydes, via a retro-aldol mechanism. The sequence is that of Serine hydroxymethyltransferase from Histophilus somni (strain 2336) (Haemophilus somnus).